Here is a 424-residue protein sequence, read N- to C-terminus: Histidine--tRNA ligase (424 aa).

This sequence belongs to the class-II aminoacyl-tRNA synthetase family. Homodimer.

It localises to the cytoplasm. The catalysed reaction is tRNA(His) + L-histidine + ATP = L-histidyl-tRNA(His) + AMP + diphosphate + H(+). The polypeptide is Histidine--tRNA ligase (Shewanella pealeana (strain ATCC 700345 / ANG-SQ1)).